A 714-amino-acid polypeptide reads, in one-letter code: Fatty acid oxidation complex subunit alpha (714 aa).

Residues 1–190 are enoyl-CoA hydratase; the sequence is MEMTSAFTLN…KLGLVDDVVP (190 aa). Positions 306-714 are 3-hydroxyacyl-CoA dehydrogenase; it reads APLNSVGILG…FWKTTATDLQ (409 aa).

In the N-terminal section; belongs to the enoyl-CoA hydratase/isomerase family. This sequence in the central section; belongs to the 3-hydroxyacyl-CoA dehydrogenase family. Heterotetramer of two alpha chains (FadJ) and two beta chains (FadI).

Its subcellular location is the cytoplasm. It carries out the reaction a (3S)-3-hydroxyacyl-CoA = a (2E)-enoyl-CoA + H2O. It catalyses the reaction a 4-saturated-(3S)-3-hydroxyacyl-CoA = a (3E)-enoyl-CoA + H2O. The enzyme catalyses a (3S)-3-hydroxyacyl-CoA + NAD(+) = a 3-oxoacyl-CoA + NADH + H(+). The catalysed reaction is (3S)-3-hydroxybutanoyl-CoA = (3R)-3-hydroxybutanoyl-CoA. It functions in the pathway lipid metabolism; fatty acid beta-oxidation. Its function is as follows. Catalyzes the formation of a hydroxyacyl-CoA by addition of water on enoyl-CoA. Also exhibits 3-hydroxyacyl-CoA epimerase and 3-hydroxyacyl-CoA dehydrogenase activities. The protein is Fatty acid oxidation complex subunit alpha of Escherichia coli (strain 55989 / EAEC).